A 128-amino-acid chain; its full sequence is MVGKHCILELYDCDPARLDDEAFLRTTITTAAKRAGATLLNLITHSFEPQGVTGLALLAESHISIHTWPESGYAAVDVFTCGDHTMPEQACAVLRDELRAQRHALRSFRRETPAAVADTVREPIQLPG.

S61 acts as the Schiff-base intermediate with substrate; via pyruvic acid in catalysis. Position 61 is a pyruvic acid (Ser); by autocatalysis (S61). The Proton acceptor; for processing activity role is filled by H66. The active-site Proton donor; for catalytic activity is C81.

Belongs to the prokaryotic AdoMetDC family. Type 1 subfamily. Heterotetramer of two alpha and two beta chains arranged as a dimer of alpha/beta heterodimers. Pyruvate is required as a cofactor. Post-translationally, is synthesized initially as an inactive proenzyme. Formation of the active enzyme involves a self-maturation process in which the active site pyruvoyl group is generated from an internal serine residue via an autocatalytic post-translational modification. Two non-identical subunits are generated from the proenzyme in this reaction, and the pyruvate is formed at the N-terminus of the alpha chain, which is derived from the carboxyl end of the proenzyme. The post-translation cleavage follows an unusual pathway, termed non-hydrolytic serinolysis, in which the side chain hydroxyl group of the serine supplies its oxygen atom to form the C-terminus of the beta chain, while the remainder of the serine residue undergoes an oxidative deamination to produce ammonia and the pyruvoyl group blocking the N-terminus of the alpha chain.

It carries out the reaction S-adenosyl-L-methionine + H(+) = S-adenosyl 3-(methylsulfanyl)propylamine + CO2. It functions in the pathway amine and polyamine biosynthesis; S-adenosylmethioninamine biosynthesis; S-adenosylmethioninamine from S-adenosyl-L-methionine: step 1/1. In terms of biological role, catalyzes the decarboxylation of S-adenosylmethionine to S-adenosylmethioninamine (dcAdoMet), the propylamine donor required for the synthesis of the polyamines spermine and spermidine from the diamine putrescine. This is S-adenosylmethionine decarboxylase proenzyme from Parasynechococcus marenigrum (strain WH8102).